The primary structure comprises 306 residues: Replication termination factor 2 (306 aa).

Residues 193–276 (AKLEKKTKKP…RSIADSEESE (84 aa)) are disordered. Positions 226 to 240 (GKPEEASLDSREKKT) are enriched in basic and acidic residues. Residues 243–255 (APKSTAMNESSSG) are compositionally biased toward polar residues. Residue Ser287 is modified to Phosphoserine.

This sequence belongs to the rtf2 family. As to quaternary structure, interacts with DDI2; probably also interacts with DDI1. Post-translationally, undergoes proteasomal degradation, via DDI1 and DDI2. Removal from stalled replisomes and degradation are required for genome stability.

The protein localises to the chromosome. Functionally, replication termination factor which is a component of the elongating replisome. Required for ATR pathway signaling upon DNA damage and has a positive activity during DNA replication. Might function to facilitate fork pausing at replication fork barriers like the rDNA. May be globally required to stimulate ATR signaling after the fork stalls or encounters a lesion. Interacts with nascent DNA. The polypeptide is Replication termination factor 2 (Homo sapiens (Human)).